Here is a 434-residue protein sequence, read N- to C-terminus: (3,5-dihydroxyphenyl)acetyl-CoA 1,2-dioxygenase (434 aa).

Substrate is bound by residues Asp184, Glu190, 223–226 (HPRY), 234–239 (AGINLK), Gly293, 322–324 (IPG), and Gln413.

It belongs to the enoyl-CoA hydratase/isomerase family. As to quaternary structure, homohexamer; dimer of trimers.

The enzyme catalyses (3,5-dihydroxyphenyl)acetyl-CoA + O2 = 2-(3,5-dihydroxyphenyl)-2-oxoacetate + CoA + H(+). Involved in the biosynthesis of the nonproteinogenic amino acid monomer (S)-3,5-dihydroxyphenylglycine (Dpg) responsible of the production of vancomycin and teicoplanin antibiotics. Catalyzes the unusual conversion 3,5-dihydroxyphenylacetyl-CoA (DPA-CoA) to 3,5-dihydroxyphenylglyoxylate. DpgC performed a net four-electron oxidation of the benzylic carbon of DPA-CoA and the hydrolysis of the thioester bond to generate free CoA. It can also use phenylacetyl-CoA (PA-CoA) as substrate. This chain is (3,5-dihydroxyphenyl)acetyl-CoA 1,2-dioxygenase (dpgC), found in Amycolatopsis orientalis (Nocardia orientalis).